Consider the following 145-residue polypeptide: 3-dehydroquinate dehydratase 2 (145 aa).

Tyr22 (proton acceptor) is an active-site residue. Residues Asn73, His79, and Asp86 each coordinate substrate. His101 serves as the catalytic Proton donor. Residues 102–103 (IS) and Arg112 each bind substrate.

The protein belongs to the type-II 3-dehydroquinase family. Homododecamer.

The enzyme catalyses 3-dehydroquinate = 3-dehydroshikimate + H2O. The protein operates within metabolic intermediate biosynthesis; chorismate biosynthesis; chorismate from D-erythrose 4-phosphate and phosphoenolpyruvate: step 3/7. In terms of biological role, catalyzes a trans-dehydration via an enolate intermediate. This Corynebacterium efficiens (strain DSM 44549 / YS-314 / AJ 12310 / JCM 11189 / NBRC 100395) protein is 3-dehydroquinate dehydratase 2 (aroQ2).